Consider the following 626-residue polypeptide: Dynein, cytoplasmic 1, intermediate chain 2a (626 aa).

Basic and acidic residues predominate over residues 20 to 43; the sequence is QIREEKKRKEEERKKKEAELKKDA. Disordered regions lie at residues 20-108 and 142-197; these read QIRE…RTLH and KEVV…HELT. The span at 82-99 shows a compositional bias: polar residues; that stretch reads TAKSVGSPSEAGSQDSGD. The segment covering 160–169 has biased composition (acidic residues); the sequence is KDEEDEEEET. Residues 177–197 show a composition bias toward basic and acidic residues; that stretch reads ETEKEKPEEKQVEEALPHELT. 7 WD repeats span residues 265 to 314, 318 to 358, 367 to 408, 417 to 457, 462 to 507, 510 to 550, and 556 to 595; these read SKQR…ATPE, HCQS…RTPV, AHTH…QPQD, SKSV…AGIS, GHHG…PLYS, DNSD…EVPT, and DGSP…AVPR.

Belongs to the dynein intermediate chain family. Homodimer. The cytoplasmic dynein 1 complex consists of two catalytic heavy chains (HCs) and a number of non-catalytic subunits presented by intermediate chains (ICs), light intermediate chains (LICs) and light chains (LCs); the composition seems to vary in respect to the IC, LIC and LC composition. The heavy chain homodimer serves as a scaffold for the probable homodimeric assembly of the respective non-catalytic subunits. The ICs and LICs bind directly to the HC dimer and the LCs assemble on the IC dimer.

The protein resides in the cytoplasm. It is found in the cytoskeleton. Functionally, acts as one of several non-catalytic accessory components of the cytoplasmic dynein 1 complex that are thought to be involved in linking dynein to cargos and to adapter proteins that regulate dynein function. Cytoplasmic dynein 1 acts as a motor for the intracellular retrograde motility of vesicles and organelles along microtubules. Plays a role in the development of anterior brain and cartilaginous structures. The chain is Dynein, cytoplasmic 1, intermediate chain 2a (dync1i2a) from Danio rerio (Zebrafish).